A 511-amino-acid polypeptide reads, in one-letter code: E3 ubiquitin-protein ligase TRIM7 (511 aa).

The segment at 29 to 82 (CSICLELFREPVSVECGHSFCRACIGRCWERPGAGSVGAATRAPPFPLPCPQCR) adopts an RING-type zinc-finger fold. S107 is subject to Phosphoserine; by RPS6KA5. A B box-type zinc finger spans residues 125-166 (AAAARCGQHGEPFKLYCQDDGRAICVVCDRAREHREHAVLPL). Zn(2+)-binding residues include C130, H133, C152, and H158. Residues 166–263 (LDEAVQEAKE…AQLGVEITQL (98 aa)) adopt a coiled-coil conformation. One can recognise a B30.2/SPRY domain in the interval 324–511 (MLKKFKEDLR…STGTYLRIWP (188 aa)).

It belongs to the TRIM/RBCC family. As to quaternary structure, forms homodimers. Interacts with GNIP2. Interacts with GYG1. Interacts with RNF187 (via C-terminus). In terms of processing, phosphorylated at Ser-107 by RPS6KA5/MSK1, which stimulates the ubiquitin ligase activity. Post-translationally, auto-ubiquitinates via 'Lys-63'-linked polyubiquitination. In terms of tissue distribution, skeletal muscle and placenta, at lower levels in heart, brain and pancreas. Isoform 1 is widely expressed with high level in testis, kidney and heart.

The protein resides in the nucleus. The protein localises to the cytoplasm. It localises to the golgi apparatus. The enzyme catalyses S-ubiquitinyl-[E2 ubiquitin-conjugating enzyme]-L-cysteine + [acceptor protein]-L-lysine = [E2 ubiquitin-conjugating enzyme]-L-cysteine + N(6)-ubiquitinyl-[acceptor protein]-L-lysine.. It participates in protein modification; protein ubiquitination. E3 ubiquitin-protein ligase that have both tumor-promoting and tumor-suppressing activities and functions in several biological processes including innate immunity, regulation of ferroptosis as well as cell proliferation and migration. Acts as an antiviral effector against multiple viruses by targeting specific viral proteins for ubiquitination and degradation including norovirus NTPase protein or SARS-CoV-2 NSP5 and NSP8 proteins. Mechanistically, recognizes the C-terminal glutamine-containing motif usually generated by viral proteases that process the polyproteins and trigger their ubiquitination and subsequent degradation. Mediates 'Lys-63'-linked polyubiquitination and stabilization of the JUN coactivator RNF187 in response to growth factor signaling via the MEK/ERK pathway, thereby regulating JUN transactivation and cellular proliferation. Promotes the TLR4-mediated signaling activation through its E3 ligase domain leading to production of pro-inflammatory cytokines and type I interferon. Also plays a negative role in the regulation of exogenous cytosolic DNA virus-triggered immune response. Mechanistically, enhances the 'Lys-48'-linked ubiquitination of STING1 leading to its proteasome-dependent degradation. Mediates the ubiquitination of the SIN3-HDAC chromatin remodeling complex component BRMS1. Modulates NCOA4-mediated ferritinophagy and ferroptosis in glioblastoma cells by ubiquitinating NCOA4, leading to its degradation. In terms of biological role, (Microbial infection) Promotes Zika virus replication by mediating envelope protein E ubiquitination. This chain is E3 ubiquitin-protein ligase TRIM7 (TRIM7), found in Homo sapiens (Human).